A 660-amino-acid chain; its full sequence is Methionine--tRNA ligase 1 (660 aa).

Positions 15–25 match the 'HIGH' region motif; the sequence is YYPSGKLHIGH. The short motif at 310 to 314 is the 'KMSKS' region element; it reads KMSKS. Residue K313 coordinates ATP. In terms of domain architecture, tRNA-binding spans 560-660; that stretch reads DFFKVELRVA…QNIPNGTKIK (101 aa).

This sequence belongs to the class-I aminoacyl-tRNA synthetase family. MetG type 2B subfamily. In terms of assembly, homodimer.

It is found in the cytoplasm. It catalyses the reaction tRNA(Met) + L-methionine + ATP = L-methionyl-tRNA(Met) + AMP + diphosphate. Its function is as follows. Is required not only for elongation of protein synthesis but also for the initiation of all mRNA translation through initiator tRNA(fMet) aminoacylation. This is Methionine--tRNA ligase 1 from Bacillus anthracis.